The chain runs to 143 residues: Large ribosomal subunit protein uL11 (143 aa).

It belongs to the universal ribosomal protein uL11 family. As to quaternary structure, part of the ribosomal stalk of the 50S ribosomal subunit. Interacts with L10 and the large rRNA to form the base of the stalk. L10 forms an elongated spine to which L12 dimers bind in a sequential fashion forming a multimeric L10(L12)X complex. Post-translationally, one or more lysine residues are methylated.

Forms part of the ribosomal stalk which helps the ribosome interact with GTP-bound translation factors. This is Large ribosomal subunit protein uL11 from Verminephrobacter eiseniae (strain EF01-2).